The following is a 555-amino-acid chain: Formate--tetrahydrofolate ligase (555 aa).

65-72 contacts ATP; the sequence is TPAGEGKS.

It belongs to the formate--tetrahydrofolate ligase family.

It carries out the reaction (6S)-5,6,7,8-tetrahydrofolate + formate + ATP = (6R)-10-formyltetrahydrofolate + ADP + phosphate. It participates in one-carbon metabolism; tetrahydrofolate interconversion. This chain is Formate--tetrahydrofolate ligase, found in Staphylococcus haemolyticus (strain JCSC1435).